A 1398-amino-acid polypeptide reads, in one-letter code: DNA-directed RNA polymerase subunit beta' (1398 aa).

Residues cysteine 73, cysteine 75, cysteine 88, and cysteine 91 each contribute to the Zn(2+) site. Aspartate 464, aspartate 466, and aspartate 468 together coordinate Mg(2+). The Zn(2+) site is built by cysteine 823, cysteine 897, cysteine 904, and cysteine 907.

It belongs to the RNA polymerase beta' chain family. In terms of assembly, the RNAP catalytic core consists of 2 alpha, 1 beta, 1 beta' and 1 omega subunit. When a sigma factor is associated with the core the holoenzyme is formed, which can initiate transcription. Requires Mg(2+) as cofactor. The cofactor is Zn(2+).

It carries out the reaction RNA(n) + a ribonucleoside 5'-triphosphate = RNA(n+1) + diphosphate. DNA-dependent RNA polymerase catalyzes the transcription of DNA into RNA using the four ribonucleoside triphosphates as substrates. This is DNA-directed RNA polymerase subunit beta' from Gluconacetobacter diazotrophicus (strain ATCC 49037 / DSM 5601 / CCUG 37298 / CIP 103539 / LMG 7603 / PAl5).